The primary structure comprises 439 residues: MLEGYRGKALELLSSLGAEIGDVLQVYNDKVSVKGILMPSYSRDDSVIVLKLDNGYNAGFSVNKVKVSLLEKGNRPQERSEHRELLPGKVKIISTGGTIVSKVEYETGAVRPALSTEEIIRFVPEIQEITSISAEILFSILSENMKPEFWVKIAEAVKRAFDEGSEGVVVAHGTDTMSYTAAALAFSIQRLPGPVVLVGSQRSSDRPSSDSGINLVSSVLLAKEAPFGEVVVNMHGESSDTYTLAHRGVKVRKMHTSRRDAFQSINDHPLAKVLWKERTVKVLRNDYLRRSDGVELNPKFENRVFLLKFYPGLRPDIVDILLSSGYRGIIVEGTGLGHTSSDFQEAFKRAVKEGLFVGMTSQCLFGRVNMNVYQTGRLLQQSGVVPLGDMLPEVALVKLMWALGQTSDLEEVKRIMLTNLVGEYNPRHSLDHFPRWKHE.

One can recognise an Asparaginase/glutaminase domain in the interval 88–419 (GKVKIISTGG…EEVKRIMLTN (332 aa)). Catalysis depends on residues Thr-98, Thr-174, Asp-175, and Lys-253.

The protein belongs to the asparaginase 1 family. GatD subfamily. As to quaternary structure, heterodimer of GatD and GatE.

The catalysed reaction is L-glutamyl-tRNA(Gln) + L-glutamine + ATP + H2O = L-glutaminyl-tRNA(Gln) + L-glutamate + ADP + phosphate + H(+). In terms of biological role, allows the formation of correctly charged Gln-tRNA(Gln) through the transamidation of misacylated Glu-tRNA(Gln) in organisms which lack glutaminyl-tRNA synthetase. The reaction takes place in the presence of glutamine and ATP through an activated gamma-phospho-Glu-tRNA(Gln). The GatDE system is specific for glutamate and does not act on aspartate. This chain is Glutamyl-tRNA(Gln) amidotransferase subunit D, found in Metallosphaera sedula (strain ATCC 51363 / DSM 5348 / JCM 9185 / NBRC 15509 / TH2).